A 525-amino-acid chain; its full sequence is Glucose-6-phosphate isomerase (525 aa).

The active-site Proton donor is Glu-347. Residues His-378 and Lys-493 contribute to the active site.

It belongs to the GPI family.

It is found in the cytoplasm. The enzyme catalyses alpha-D-glucose 6-phosphate = beta-D-fructose 6-phosphate. It functions in the pathway carbohydrate biosynthesis; gluconeogenesis. Its pathway is carbohydrate degradation; glycolysis; D-glyceraldehyde 3-phosphate and glycerone phosphate from D-glucose: step 2/4. Catalyzes the reversible isomerization of glucose-6-phosphate to fructose-6-phosphate. This Chlamydia trachomatis serovar D (strain ATCC VR-885 / DSM 19411 / UW-3/Cx) protein is Glucose-6-phosphate isomerase.